Consider the following 310-residue polypeptide: 4-hydroxyproline 2-epimerase (310 aa).

Residue Cys-88 is the Proton acceptor of the active site. Substrate is bound by residues 89–90, His-208, and Asp-232; that span reads GH. The active-site Proton donor is Cys-236. 237–238 provides a ligand contact to substrate; that stretch reads GT.

It belongs to the proline racemase family.

It carries out the reaction trans-4-hydroxy-L-proline = cis-4-hydroxy-D-proline. Functionally, catalyzes the epimerization of trans-4-hydroxy-L-proline (t4LHyp) to cis-4-hydroxy-D-proline (c4DHyp). Is likely involved in a degradation pathway that converts t4LHyp to alpha-ketoglutarate. Displays no proline racemase activity. The polypeptide is 4-hydroxyproline 2-epimerase (Acinetobacter baumannii (strain ATCC 17978 / DSM 105126 / CIP 53.77 / LMG 1025 / NCDC KC755 / 5377)).